The primary structure comprises 190 residues: Translation initiation factor IF-3 (190 aa).

Positions 159–190 (QSEVQQKPKREGRNMIMFLSPRKSPLIKKDNE) are disordered.

This sequence belongs to the IF-3 family. As to quaternary structure, monomer.

The protein localises to the cytoplasm. Its function is as follows. IF-3 binds to the 30S ribosomal subunit and shifts the equilibrium between 70S ribosomes and their 50S and 30S subunits in favor of the free subunits, thus enhancing the availability of 30S subunits on which protein synthesis initiation begins. The chain is Translation initiation factor IF-3 from Prochlorococcus marinus (strain MIT 9215).